The primary structure comprises 255 residues: SLA class II histocompatibility antigen, DQ haplotype D alpha chain (255 aa).

The signal sequence occupies residues 1-23 (MVPGRVLMWGALALTAVMSACGG). An alpha-1 region spans residues 24–120 (EDIAADHVAS…QVPEVTVFPK (97 aa)). At 24–217 (EDIAADHVAS…IPAPMSELTE (194 aa)) the chain is on the extracellular side. 2 N-linked (GlcNAc...) asparagine glycosylation sites follow: N104 and N144. In terms of domain architecture, Ig-like C1-type spans 113–205 (PEVTVFPKSP…LDKPLLKHWE (93 aa)). The tract at residues 121–204 (SPVMLGQPNT…GLDKPLLKHW (84 aa)) is alpha-2. A disulfide bond links C133 and C189. The tract at residues 205-217 (EPEIPAPMSELTE) is connecting peptide. A helical membrane pass occupies residues 218-240 (TVVCALGLIVGLVGIVVGTVFII). Over 241–255 (QGLRSGGPSRHQGSL) the chain is Cytoplasmic.

Belongs to the MHC class II family.

The protein localises to the membrane. The chain is SLA class II histocompatibility antigen, DQ haplotype D alpha chain from Sus scrofa (Pig).